Consider the following 382-residue polypeptide: Probable purine permease 4 (382 aa).

The next 10 membrane-spanning stretches (helical) occupy residues 25–45 (LTLLIVTYFFLFFGSIASSLL), 62–82 (WVQSAGFPLLLILIYFPHYVL), 98–118 (LIFSVLIGLVLGFNNFLFSWG), 121–141 (YLPVSTSSLLLSTQLVFTLIL), 150–170 (ITFSNLNCVVLLTLSSVLLAL), 185–205 (YFIGYVSTIGAGLLFALYLPV), 224–244 (LVMEFAATVFATIGMACEGGF), 260–280 (TFYWTFAILANVVTWQLSFAA), 291–311 (ITGGICMTALLAMNVIGGVVA), and 315–335 (VFGGVKIVSTVLCIWGFSSYT). Positions 66 to 170 (AGFPLLLILI…LTLSSVLLAL (105 aa)) constitute an EamA domain. The segment at 345 to 364 (EEKEKGEYSGVKTTEDSGEM) is disordered.

It belongs to the purine permeases (TC 2.A.7.14) family.

The protein resides in the membrane. The protein is Probable purine permease 4 (PUP4) of Arabidopsis thaliana (Mouse-ear cress).